Consider the following 316-residue polypeptide: Ribosomal RNA large subunit methyltransferase F (316 aa).

It belongs to the methyltransferase superfamily. METTL16/RlmF family.

Its subcellular location is the cytoplasm. The enzyme catalyses adenosine(1618) in 23S rRNA + S-adenosyl-L-methionine = N(6)-methyladenosine(1618) in 23S rRNA + S-adenosyl-L-homocysteine + H(+). Its function is as follows. Specifically methylates the adenine in position 1618 of 23S rRNA. This Pseudomonas putida (strain W619) protein is Ribosomal RNA large subunit methyltransferase F.